We begin with the raw amino-acid sequence, 303 residues long: UDP-N-acetylenolpyruvoylglucosamine reductase (303 aa).

Positions 32–212 constitute an FAD-binding PCMH-type domain; the sequence is IGGKADLFLN…EQETKEYLAK (181 aa). The active site involves Arg176. The active-site Proton donor is the Ser226. Glu296 is a catalytic residue.

Belongs to the MurB family. FAD is required as a cofactor.

Its subcellular location is the cytoplasm. The catalysed reaction is UDP-N-acetyl-alpha-D-muramate + NADP(+) = UDP-N-acetyl-3-O-(1-carboxyvinyl)-alpha-D-glucosamine + NADPH + H(+). It participates in cell wall biogenesis; peptidoglycan biosynthesis. Functionally, cell wall formation. This is UDP-N-acetylenolpyruvoylglucosamine reductase from Desulforamulus reducens (strain ATCC BAA-1160 / DSM 100696 / MI-1) (Desulfotomaculum reducens).